The chain runs to 131 residues: D-ribose pyranase (131 aa).

Catalysis depends on histidine 20, which acts as the Proton donor. Substrate contacts are provided by residues aspartate 28, histidine 98, and 120–122; that span reads YAN.

Belongs to the RbsD / FucU family. RbsD subfamily. As to quaternary structure, homodecamer.

The protein resides in the cytoplasm. It catalyses the reaction beta-D-ribopyranose = beta-D-ribofuranose. It functions in the pathway carbohydrate metabolism; D-ribose degradation; D-ribose 5-phosphate from beta-D-ribopyranose: step 1/2. Catalyzes the interconversion of beta-pyran and beta-furan forms of D-ribose. In Bacillus cereus (strain ZK / E33L), this protein is D-ribose pyranase.